The primary structure comprises 901 residues: Probable inorganic carbon transporter subunit DabA (901 aa).

Residues C424, D426, H606, and C621 each contribute to the Zn(2+) site.

This sequence belongs to the inorganic carbon transporter (TC 9.A.2) DabA family. As to quaternary structure, forms a complex with DabB. The cofactor is Zn(2+).

It is found in the cell membrane. Functionally, part of an energy-coupled inorganic carbon pump. In Staphylococcus aureus (strain MRSA252), this protein is Probable inorganic carbon transporter subunit DabA.